A 136-amino-acid polypeptide reads, in one-letter code: Cytokine-like protein 1 (136 aa).

Residues 1-22 (MRTPGPLPVLLLLLAGAPAARP) form the signal peptide.

In terms of tissue distribution, specifically expressed in CD34+ hematopoietic cells.

The protein localises to the secreted. In Homo sapiens (Human), this protein is Cytokine-like protein 1 (CYTL1).